The primary structure comprises 292 residues: DCN1-like protein 4 (292 aa).

Residues 43 to 83 (HQTGSLRSCSSSDCFNKVMPPRKKRRPASGDDLSAKKSRHD) are disordered. Over residues 45–56 (TGSLRSCSSSDC) the composition is skewed to polar residues. A Glycyl lysine isopeptide (Lys-Gly) (interchain with G-Cter in SUMO2) cross-link involves residue Lys95. One can recognise a DCUN1 domain in the interval 101-287 (FSSKRCLEWF…LLDEFVEWYK (187 aa)).

In terms of assembly, interacts (via the DCUN1 domain) with the unneddylated cullins: interacts with CUL1, CUL2, CUL3, CUL4A, CUL4B and CUL5; these interactions promote the cullin neddylation and the identity of the cullin dictates the affinity of the interaction. Interacts with RBX1 and RNF7. Interacts with CAND1; this interaction is bridged by cullins such as CUL3 and strongly inhibits the neddylation of CUL3. These CAND-cullin-DCNL complexes can only be neddylated in the presence of a substrate adapter. Interacts (via DCUN1 domain) with UBE2M (N-terminally acetylated form) and probably with UBE2F (N-terminally acetylated form).

It is found in the nucleus. Functionally, contributes to the neddylation of all cullins by transferring NEDD8 from N-terminally acetylated NEDD8-conjugating E2s enzyme to different cullin C-terminal domain-RBX complexes which are necessary for the activation of cullin-RING E3 ubiquitin ligases (CRLs). The polypeptide is DCN1-like protein 4 (Homo sapiens (Human)).